A 269-amino-acid polypeptide reads, in one-letter code: Protein OPG079 (269 aa).

The protein belongs to the orthopoxvirus OPG079 family. In terms of assembly, homoomultimer (Potential). Interacts with the small subunit of ribonucleotide reductase. Interacts with host FAM111A; this interaction protomtes OPG079 degradation through autophagy.

Its subcellular location is the host cytoplasm. Its function is as follows. Plays an essential role in viral DNA replication. Binds to ssDNA with high affinity and localizes to cytoplasmic factories where nascent viral genomes accumulate. May disrupt loops, hairpins and other secondary structures present on ssDNA to reduce and eliminate pausing of viral DNA polymerase at specific sites during elongation. The polypeptide is Protein OPG079 (OPG079) (Vaccinia virus (strain Copenhagen) (VACV)).